Consider the following 732-residue polypeptide: E3 ubiquitin-protein ligase TRIM56 (732 aa).

The RING-type zinc finger occupies 21 to 60 (CKICLEQLRVPKTLPCLHTYCQDCLAQLAEGSRLRCPECR). The B box-type zinc finger occupies 164 to 205 (RQAAQCPQHPGEALRFLCQPCSQLLCRECRLDPHLDHPCLPL). Zn(2+)-binding residues include C169, H172, C192, and H197. A coiled-coil region spans residues 211-286 (ARRPGLEELL…LRAHVEAAEE (76 aa)). The segment covering 374–384 (LPQKDSGKDGA) has biased composition (basic and acidic residues). Residues 374 to 462 (LPQKDSGKDG…PAPGPNLEGS (89 aa)) form a disordered region. Positions 389–405 (GDATQPQSRDGVQTPNQ) are enriched in polar residues. Residue T402 is modified to Phosphothreonine. A compositionally biased stretch (basic and acidic residues) spans 407–416 (DGAKTPKESR). At T419 the chain carries Phosphothreonine. Residues 434–446 (SNKKRKFKGRLKS) are compositionally biased toward basic residues. S452 carries the phosphoserine modification.

It belongs to the TRIM/RBCC family. As to quaternary structure, interacts with STING1. Interacts with TICAM1.

The protein resides in the cytoplasm. The enzyme catalyses S-ubiquitinyl-[E2 ubiquitin-conjugating enzyme]-L-cysteine + [acceptor protein]-L-lysine = [E2 ubiquitin-conjugating enzyme]-L-cysteine + N(6)-ubiquitinyl-[acceptor protein]-L-lysine.. It functions in the pathway protein modification; protein ubiquitination. Functionally, E3 ubiquitin-protein ligase that plays a key role in innate antiviral immunity by mediating ubiquitination of CGAS and STING1. In response to pathogen- and host-derived double-stranded DNA (dsDNA), targets STING1 to 'Lys-63'-linked ubiquitination, thereby promoting its homodimerization, a step required for the production of type I interferon IFN-beta. Also mediate monoubiquitination of CGAS, thereby promoting CGAS oligomerization and subsequent activation. Independently of its E3 ubiquitin ligase activity, positive regulator of TLR3 signaling. Potentiates extracellular double stranded RNA (dsRNA)-induced expression of IFNB1 and interferon-stimulated genes ISG15, IFIT1/ISG56, CXCL10, OASL and CCL5/RANTES. Restricts bovine viral diarrhea virus (BVDV) replication. This is E3 ubiquitin-protein ligase TRIM56 from Bos taurus (Bovine).